The primary structure comprises 230 residues: Lecithin retinol acyltransferase (230 aa).

Over 1–194 (MKNPMLEVVS…VKIIIRDQRS (194 aa)) the chain is Cytoplasmic. Residues 50 to 177 (VLEVPRTHLT…CRYGTPISPQ (128 aa)) form the LRAT domain. Active-site residues include H60 and H72. C161 (acyl-thioester intermediate) is an active-site residue. A helical transmembrane segment spans residues 195-215 (VLASAVLGLASIVCTGLVSYT). The Lumenal portion of the chain corresponds to 216-230 (TLPAIFIPFFLWMAG).

The protein belongs to the H-rev107 family. As to expression, hepatic stellate cells and endothelial cells (at protein level). Found at high levels in testis and liver, followed by retinal pigment epithelium, small intestine, prostate, pancreas and colon. Low expression observed in brain. In fetal tissues, expressed in retinal pigment epithelium and liver, and barely in the brain.

It is found in the endoplasmic reticulum membrane. The protein localises to the rough endoplasmic reticulum. Its subcellular location is the endosome. It localises to the multivesicular body. The protein resides in the cytoplasm. It is found in the perinuclear region. It carries out the reaction all-trans-retinol--[retinol-binding protein] + a 1,2-diacyl-sn-glycero-3-phosphocholine = apo--[retinol-binding protein] + an all-trans-retinyl ester + a 2-acyl-sn-glycero-3-phosphocholine. The catalysed reaction is 1,2-dihexadecanoyl-sn-glycero-3-phosphocholine + all-trans-retinol = all-trans-retinyl hexadecanoate + 2-hexadecanoyl-sn-glycero-3-phosphocholine. It catalyses the reaction 1,2-diheptanoyl-sn-glycero-3-phosphocholine + all-trans-retinol--[retinol-binding protein] = all-trans-retinyl heptanoate + 2-heptanoyl-sn-glycero-3-phosphocholine + apo--[retinol-binding protein]. The enzyme catalyses 1,2-dioctanoyl-sn-glycero-3-phosphocholine + all-trans-retinol--[retinol-binding protein] = 2-octanoyl-sn-glycero-3-phosphocholine + all-trans-retinyl octanoate + apo--[retinol-binding protein]. It carries out the reaction all-trans-retinol--[retinol-binding protein] + 1,2-dihexadecanoyl-sn-glycero-3-phosphocholine = apo--[retinol-binding protein] + all-trans-retinyl hexadecanoate + 2-hexadecanoyl-sn-glycero-3-phosphocholine. The catalysed reaction is 1,2-didodecanoyl-sn-glycero-3-phosphocholine + all-trans-retinol--[retinol-binding protein] = 2-dodecanoyl-sn-glycero-3-phosphocholine + all-trans-retinyl dodecanoate + apo--[retinol-binding protein]. It participates in cofactor metabolism; retinol metabolism. Its activity is regulated as follows. Inhibited by all-trans-retinyl alpha-bromoacetate and N-boc-L-biocytinyl-11-aminoundecane chloro-methyl ketone (BACMK). In terms of biological role, transfers the acyl group from the sn-1 position of phosphatidylcholine to all-trans retinol, producing all-trans retinyl esters. Retinyl esters are storage forms of vitamin A. LRAT plays a critical role in vision. It provides the all-trans retinyl ester substrates for the isomerohydrolase which processes the esters into 11-cis-retinol in the retinal pigment epithelium; due to a membrane-associated alcohol dehydrogenase, 11 cis-retinol is oxidized and converted into 11-cis-retinaldehyde which is the chromophore for rhodopsin and the cone photopigments. Required for the survival of cone photoreceptors and correct rod photoreceptor cell morphology. The polypeptide is Lecithin retinol acyltransferase (Homo sapiens (Human)).